Consider the following 273-residue polypeptide: Exosome complex component MTR3 (273 aa).

Positions 1-36 (MPGDHRRIRGPEESQPPQLYAAEDDETPAARDPTRL) are disordered.

This sequence belongs to the RNase PH family. In terms of assembly, component of the RNA exosome core complex (Exo-9), composed of EXOSC1, EXOSC2, EXOSC3, EXOSC4, EXOSC5, EXOSC6, EXOSC7, EXOSC8 and EXOSC9; within the complex interacts with EXOSC1, EXOSC7 and EXOSC8. The catalytically inactive RNA exosome core complex (Exo-9) associates with the catalytic subunit EXOSC10/RRP6. Exo-9 may associate with DIS3 to form the nucleolar exosome complex, or DIS3L to form the cytoplasmic exosome complex. Exo-9 is formed by a hexameric base ring consisting of the heterodimers EXOSC4-EXOSC9, EXOSC5-EXOSC8 and EXOSC6-EXOSC7, and a cap ring consisting of EXOSC1, EXOSC2 and EXOSC3. The RNA exosome complex associates with cofactors EXOSC10/RRP6, C1D/RRP47, MPHOSPH6/MPP6 and MTREX/MTR4.

It localises to the cytoplasm. Its subcellular location is the nucleus. It is found in the nucleolus. Non-catalytic component of the RNA exosome complex which has 3'-&gt;5' exoribonuclease activity and participates in a multitude of cellular RNA processing and degradation events. In the nucleus, the RNA exosome complex is involved in proper maturation of stable RNA species such as rRNA, snRNA and snoRNA, in the elimination of RNA processing by-products and non-coding 'pervasive' transcripts, such as antisense RNA species and promoter-upstream transcripts (PROMPTs), and of mRNAs with processing defects, thereby limiting or excluding their export to the cytoplasm. The RNA exosome may be involved in Ig class switch recombination (CSR) and/or Ig variable region somatic hypermutation (SHM) by targeting AICDA deamination activity to transcribed dsDNA substrates. In the cytoplasm, the RNA exosome complex is involved in general mRNA turnover and specifically degrades inherently unstable mRNAs containing AU-rich elements (AREs) within their 3' untranslated regions, and in RNA surveillance pathways, preventing translation of aberrant mRNAs. It seems to be involved in degradation of histone mRNA. The catalytic inactive RNA exosome core complex of 9 subunits (Exo-9) is proposed to play a pivotal role in the binding and presentation of RNA for ribonucleolysis, and to serve as a scaffold for the association with catalytic subunits and accessory proteins or complexes. The sequence is that of Exosome complex component MTR3 (Exosc6) from Mus musculus (Mouse).